The following is a 441-amino-acid chain: GTPase Der (441 aa).

2 EngA-type G domains span residues 3–167 (PLIA…PNKT) and 176–351 (TRIA…EQFA). Residues 9 to 16 (GRPNVGKS), 56 to 60 (DTGGF), 119 to 122 (NKID), 182 to 189 (GRPNVGKS), 229 to 233 (DTAGI), and 294 to 297 (NKWD) contribute to the GTP site. The region spanning 352–436 (KRISTSDLNR…PMRLLFKGRE (85 aa)) is the KH-like domain.

This sequence belongs to the TRAFAC class TrmE-Era-EngA-EngB-Septin-like GTPase superfamily. EngA (Der) GTPase family. In terms of assembly, associates with the 50S ribosomal subunit.

GTPase that plays an essential role in the late steps of ribosome biogenesis. The chain is GTPase Der from Geotalea daltonii (strain DSM 22248 / JCM 15807 / FRC-32) (Geobacter daltonii).